A 149-amino-acid chain; its full sequence is Flagellar assembly factor FliW (149 aa).

This sequence belongs to the FliW family. As to quaternary structure, interacts with translational regulator CsrA and flagellin(s).

It localises to the cytoplasm. Acts as an anti-CsrA protein, binds CsrA and prevents it from repressing translation of its target genes, one of which is flagellin. Binds to flagellin and participates in the assembly of the flagellum. This Thermotoga sp. (strain RQ2) protein is Flagellar assembly factor FliW.